A 178-amino-acid polypeptide reads, in one-letter code: Interleukin-10 (178 aa).

Positions 1 to 18 are cleaved as a signal peptide; it reads MHSSALLCCLVVLTGVRA. Disulfide bonds link Cys-30/Cys-126 and Cys-80/Cys-132. Asn-134 is a glycosylation site (N-linked (GlcNAc...) asparagine).

The protein belongs to the IL-10 family. As to quaternary structure, homodimer. Interacts with IL10RA and IL10RB.

The protein localises to the secreted. Major immune regulatory cytokine that acts on many cells of the immune system where it has profound anti-inflammatory functions, limiting excessive tissue disruption caused by inflammation. Mechanistically, IL10 binds to its heterotetrameric receptor comprising IL10RA and IL10RB leading to JAK1 and STAT2-mediated phosphorylation of STAT3. In turn, STAT3 translocates to the nucleus where it drives expression of anti-inflammatory mediators. Targets antigen-presenting cells (APCs) such as macrophages and monocytes and inhibits their release of pro-inflammatory cytokines including granulocyte-macrophage colony-stimulating factor /GM-CSF, granulocyte colony-stimulating factor/G-CSF, IL-1 alpha, IL-1 beta, IL-6, IL-8 and TNF-alpha. Also interferes with antigen presentation by reducing the expression of MHC-class II and co-stimulatory molecules, thereby inhibiting their ability to induce T cell activation. In addition, controls the inflammatory response of macrophages by reprogramming essential metabolic pathways including mTOR signaling. The protein is Interleukin-10 (IL10) of Papio hamadryas (Hamadryas baboon).